We begin with the raw amino-acid sequence, 147 residues long: Small ribosomal subunit protein uS12 (147 aa).

This sequence belongs to the universal ribosomal protein uS12 family. In terms of assembly, part of the 30S ribosomal subunit.

Its function is as follows. With S4 and S5 plays an important role in translational accuracy. Located at the interface of the 30S and 50S subunits. The chain is Small ribosomal subunit protein uS12 from Methanococcus maripaludis (strain DSM 14266 / JCM 13030 / NBRC 101832 / S2 / LL).